The primary structure comprises 1132 residues: Error-prone DNA polymerase (1132 aa).

The protein belongs to the DNA polymerase type-C family. DnaE2 subfamily.

It is found in the cytoplasm. The enzyme catalyses DNA(n) + a 2'-deoxyribonucleoside 5'-triphosphate = DNA(n+1) + diphosphate. Its function is as follows. DNA polymerase involved in damage-induced mutagenesis and translesion synthesis (TLS). It is not the major replicative DNA polymerase. This is Error-prone DNA polymerase from Anaeromyxobacter dehalogenans (strain 2CP-C).